Consider the following 98-residue polypeptide: Small ribosomal subunit protein bS16 (98 aa).

This sequence belongs to the bacterial ribosomal protein bS16 family.

The protein is Small ribosomal subunit protein bS16 of Pseudothermotoga lettingae (strain ATCC BAA-301 / DSM 14385 / NBRC 107922 / TMO) (Thermotoga lettingae).